A 741-amino-acid chain; its full sequence is Pentatricopeptide repeat-containing protein At3g58590 (741 aa).

PPR repeat units follow at residues 48–78 (PVYVCNNIISLYEKLGEVSLAGKVFDQMPER), 79–113 (NKVSFNTIIKGYSKYGDVDKAWGVFSEMRYFGYLP), 114–146 (NQSTVSGLLSCASLDVRAGTQLHGLSLKYGLFM), 148–178 (DAFVGTCLLCLYGRLDLLEMAEQVFEDMPFK), 179–213 (SLETWNHMMSLLGHRGFLKECMFFFRELVRMGASL), 214–248 (TESSFLGVLKGVSCVKDLDISKQLHCSATKKGLDC), 249–279 (EISVVNSLISAYGKCGNTHMAERMFQDAGSW), 280–314 (DIVSWNAIICATAKSENPLKALKLFVSMPEHGFSP), 315–349 (NQGTYVSVLGVSSLVQLLSCGRQIHGMLIKNGCET), 350–380 (GIVLGNALIDFYAKCGNLEDSRLCFDYIRDK), 381–414 (NIVCWNALLSGYANKDGPICLSLFLQMLQMGFRP), 415–445 (TEYTFSTALKSCCVTELQQLHSVIVRMGYED), 446–481 (NDYVLSSLMRSYAKNQLMNDALLLLDWASGPTSVVP), 483–508 (NIVAGIYSRRGQYHESVKLISTLEQP), 509–543 (DTVSWNIAIAACSRSDYHEEVIELFKHMLQSNIRP), 544–578 (DKYTFVSILSLCSKLCDLTLGSSIHGLITKTDFSC), 580–610 (DTFVCNVLIDMYGKCGSIRSVMKVFEETREK), 611–645 (NLITWTALISCLGIHGYGQEALEKFKETLSLGFKP), 646–680 (DRVSFISILTACRHGGMVKEGMGLFQKMKDYGVEP), and 681–715 (EMDHYRCAVDLLARNGYLKEAEHLIREMPFPADAP).

The protein belongs to the PPR family. P subfamily.

The sequence is that of Pentatricopeptide repeat-containing protein At3g58590 from Arabidopsis thaliana (Mouse-ear cress).